A 303-amino-acid chain; its full sequence is Recombination-associated protein RdgC (303 aa).

It belongs to the RdgC family.

The protein localises to the cytoplasm. It localises to the nucleoid. Its function is as follows. May be involved in recombination. The sequence is that of Recombination-associated protein RdgC from Aeromonas hydrophila subsp. hydrophila (strain ATCC 7966 / DSM 30187 / BCRC 13018 / CCUG 14551 / JCM 1027 / KCTC 2358 / NCIMB 9240 / NCTC 8049).